Consider the following 336-residue polypeptide: HTH-type transcriptional regulator SyrM (336 aa).

Residues 41 to 98 (IDLNLLVALEALLEYRNVTHAGQHIGRSQPAMSRALGRLRGLFNDDLLVRSSTGLIPT) enclose the HTH lysR-type domain. A DNA-binding region (H-T-H motif) is located at residues 58–77 (VTHAGQHIGRSQPAMSRALG).

It belongs to the LysR transcriptional regulatory family.

In terms of biological role, acts in trans to stimulate nod gene expression via nodD3 and exo gene expression via SyrA. This Rhizobium etli protein is HTH-type transcriptional regulator SyrM (syrM).